A 98-amino-acid chain; its full sequence is Complement inhibitor RaCI1 (98 aa).

Residues 1–20 form the signal peptide; it reads MNAMLVLFIASALFISEHNT. 3 disulfide bridges follow: C33–C57, C38–C59, and C53–C74. Residues 79–98 are disordered; it reads TTKPPMAPGDNKDNKEEESN. Residues 88-98 show a composition bias toward basic and acidic residues; it reads DNKDNKEEESN.

This sequence belongs to the RaCI family. As to expression, expressed in salivary glands.

Its subcellular location is the secreted. Functionally, complement inhibitor. Prevents complement-mediated C5 activation by binding to C5. Binds C5 at a different binding site than the other tick complement inhibitors OmCI and CirpT1, and the drug eculizumab. Inhibits the complement in human and guinea pig but not in other species tested (rabbit, rat, mouse, and pig). The sequence is that of Complement inhibitor RaCI1 from Rhipicephalus appendiculatus (Brown ear tick).